We begin with the raw amino-acid sequence, 147 residues long: Ubiquitin-conjugating enzyme E2 D4 (147 aa).

Positions 1 to 147 (MALKRIQKEL…AREWTQKYAM (147 aa)) constitute a UBC core domain. Cys85 (glycyl thioester intermediate) is an active-site residue.

The protein belongs to the ubiquitin-conjugating enzyme family.

It catalyses the reaction S-ubiquitinyl-[E1 ubiquitin-activating enzyme]-L-cysteine + [E2 ubiquitin-conjugating enzyme]-L-cysteine = [E1 ubiquitin-activating enzyme]-L-cysteine + S-ubiquitinyl-[E2 ubiquitin-conjugating enzyme]-L-cysteine.. The protein operates within protein modification; protein ubiquitination. In terms of biological role, accepts ubiquitin from the E1 complex and catalyzes its covalent attachment to other proteins. In vitro able to promote polyubiquitination using all 7 ubiquitin Lys residues, but may prefer 'Lys-11' and 'Lys-48'-linked polyubiquitination. The polypeptide is Ubiquitin-conjugating enzyme E2 D4 (UBE2D4) (Homo sapiens (Human)).